A 586-amino-acid chain; its full sequence is Glutathione hydrolase 5 proenzyme (586 aa).

Residues 1-8 (MARGYGAT) are Cytoplasmic-facing. Residues 9–29 (VSLVLLGLGLALAVIVLAVVL) traverse the membrane as a helical; Signal-anchor for type II membrane protein segment. At 30–586 (SRHQAPCGPQ…LRKSGEAAGY (557 aa)) the chain is on the extracellular side. N-linked (GlcNAc...) asparagine glycosylation occurs at N98. Position 110 (R110) interacts with L-glutamate. N-linked (GlcNAc...) asparagine glycans are attached at residues N204, N303, and N347. T388 (nucleophile) is an active-site residue. Residues T406, E427, and 469–470 (SS) each bind L-glutamate. 2 N-linked (GlcNAc...) asparagine glycosylation sites follow: N535 and N550.

The protein belongs to the gamma-glutamyltransferase family. As to quaternary structure, heterodimer composed of the light and heavy chains. The active site is located in the light chain. Cleaved by autocatalysis into a large and a small subunit. In terms of processing, glycosylated. In terms of tissue distribution, expressed in follicular dendritic cells in lymphoid follicles (at protein level).

It localises to the membrane. The catalysed reaction is glutathione + H2O = L-cysteinylglycine + L-glutamate. It catalyses the reaction an S-substituted glutathione + H2O = an S-substituted L-cysteinylglycine + L-glutamate. The enzyme catalyses leukotriene C4 + H2O = leukotriene D4 + L-glutamate. It carries out the reaction S-[(2E,6E,10E)-geranylgeranyl]-L-glutathione + H2O = S-[(2E,6E,10E)-geranylgeranyl]-L-cysteinylglycine + L-glutamate. The catalysed reaction is an N-terminal (5-L-glutamyl)-[peptide] + an alpha-amino acid = 5-L-glutamyl amino acid + an N-terminal L-alpha-aminoacyl-[peptide]. It participates in sulfur metabolism; glutathione metabolism. Its pathway is lipid metabolism; leukotriene D4 biosynthesis. Its activity is regulated as follows. Inhibited by serine-borate. In terms of biological role, cleaves the gamma-glutamyl bond of extracellular glutathione tripeptide (gamma-Glu-Cys-Gly) and certain glutathione conjugates. Hydrolyzes glutathione releasing L-Glu and Cys-Gly dipeptide which is further metabolized to maintain extracellular cysteine levels but also to provide cysteine necessary for intracellular glutathione synthesis. Among glutathione-S-conjugates metabolizes leukotriene C4 (LTC4) and S-geranylgeranyl-glutathione (GGG), but is inactive toward gamma-glutamyl leucine. Converts extracellular LTC4 to LTD4 during acute inflammatory response. Acts as a negative regulator of GGG bioactivity. GGT5 (via GGG catabolism) and ABCC1 (via extracellular transport) establish GGG gradients within lymphoid tissues to position P2RY8-positive lymphocytes at germinal centers in lymphoid follicles and restrict their chemotactic transmigration from blood vessels to bone marrow parenchyma. The transpeptidation reaction, i.e. the transfer of gamma-glutamyl moiety to an acceptor molecule to yield a new gamma-glutamyl compound requires high concentration of dipeptide acceptor and is considered nonphysiological. The sequence is that of Glutathione hydrolase 5 proenzyme (GGT5) from Homo sapiens (Human).